A 309-amino-acid polypeptide reads, in one-letter code: Dermonecrotic toxin LarSicTox-alphaIB2bi (309 aa).

Val1 is a signal peptide. The propeptide occupies 2–27 (RATEKFAPIYFFCHPLQSAETDVAER). His38 is an active-site residue. Mg(2+) is bound by residues Glu58 and Asp60. The Nucleophile role is filled by His74. Intrachain disulfides connect Cys78-Cys84 and Cys80-Cys223. Asp118 lines the Mg(2+) pocket. The N-linked (GlcNAc...) asparagine glycan is linked to Asn286.

The protein belongs to the arthropod phospholipase D family. Class II subfamily. Mg(2+) is required as a cofactor. In terms of tissue distribution, expressed by the venom gland.

Its subcellular location is the secreted. It catalyses the reaction an N-(acyl)-sphingosylphosphocholine = an N-(acyl)-sphingosyl-1,3-cyclic phosphate + choline. The enzyme catalyses N-hexanoyl-sphing-4-enine-1-phosphocholine = N-(hexanoyl)-sphing-4-enine-1,3-cyclic phosphate + choline. The catalysed reaction is N-(dodecanoyl)-sphing-4-enine-1-phosphocholine = N-dodecanoyl-sphing-4-enine-1,3-cyclic phosphate + choline. It carries out the reaction a 1-acyl-sn-glycero-3-phosphocholine = a 1-acyl-sn-glycero-2,3-cyclic phosphate + choline. It catalyses the reaction 1-tetradecanoyl-sn-glycero-3-phosphocholine = 1-tetradecanoyl-sn-glycero-2,3-cyclic phosphate + choline. The enzyme catalyses 1-octanoyl-sn-glycero-3-phosphocholine = 1-octanoyl-sn-glycero-2,3-cyclic phosphate + choline. The catalysed reaction is 1-hexadecanoyl-sn-glycero-3-phosphocholine = 1-hexadecanoyl-sn-glycero-2,3-cyclic phosphate + choline. It carries out the reaction an N-(acyl)-sphingosylphosphoethanolamine = an N-(acyl)-sphingosyl-1,3-cyclic phosphate + ethanolamine. It catalyses the reaction N-dodecanoyl-heptadecasphing-4-enine-1-phosphoethanolamine = N-dodecanoyl-heptadecasphing-4-enine-1,3-cyclic phosphate + ethanolamine. Functionally, dermonecrotic toxins cleave the phosphodiester linkage between the phosphate and headgroup of certain phospholipids (sphingolipid and lysolipid substrates), forming an alcohol (often choline) and a cyclic phosphate. This toxin acts on sphingomyelin (SM) with high activity and on lysophosphatidylcholine (LPC) and ceramide phosphoethanolamine (CPE) with low activity. In vivo, shows potent insecticidal activities. On mammals, induces dermonecrosis, hemolysis, increased vascular permeability, edema, inflammatory response, and platelet aggregation. The chain is Dermonecrotic toxin LarSicTox-alphaIB2bi from Loxosceles arizonica (Arizona brown spider).